The primary structure comprises 564 residues: Urocanate hydratase (564 aa).

NAD(+)-binding positions include 54–55 (GG), glutamine 132, 178–180 (GMG), glutamate 198, arginine 203, 244–245 (NA), 269–273 (QTSAH), 279–280 (YL), and tyrosine 328. Cysteine 416 is an active-site residue. Position 498 (glycine 498) interacts with NAD(+).

It belongs to the urocanase family. In terms of assembly, homodimer. NAD(+) is required as a cofactor.

The enzyme catalyses 4-imidazolone-5-propanoate = trans-urocanate + H2O. It functions in the pathway amino-acid degradation; L-histidine degradation into L-glutamate; N-formimidoyl-L-glutamate from L-histidine: step 2/3. This Trifolium repens (Creeping white clover) protein is Urocanate hydratase.